We begin with the raw amino-acid sequence, 668 residues long: Bifunctional polymyxin resistance protein ArnA (668 aa).

The segment at 1–307 (MSNKAVVFAY…ELGLVDGSLL (307 aa)) is formyltransferase ArnAFT. H106 functions as the Proton donor; for formyltransferase activity in the catalytic mechanism. (6R)-10-formyltetrahydrofolate contacts are provided by residues R116 and 138 to 142 (VKRAD). The dehydrogenase ArnADH stretch occupies residues 317–668 (RRTRVLILGV…IADRAKQEAR (352 aa)). NAD(+) contacts are provided by residues D350 and 371–372 (DI). Residues A396, Y401, and 435–436 (TS) each bind UDP-alpha-D-glucuronate. Catalysis depends on E437, which acts as the Proton acceptor; for decarboxylase activity. UDP-alpha-D-glucuronate is bound by residues R463, N494, 528-537 (RLFDGGEQKR), and Y615. R621 serves as the catalytic Proton donor; for decarboxylase activity.

This sequence in the N-terminal section; belongs to the Fmt family. UDP-L-Ara4N formyltransferase subfamily. The protein in the C-terminal section; belongs to the NAD(P)-dependent epimerase/dehydratase family. UDP-glucuronic acid decarboxylase subfamily. As to quaternary structure, homohexamer, formed by a dimer of trimers.

It carries out the reaction UDP-alpha-D-glucuronate + NAD(+) = UDP-beta-L-threo-pentopyranos-4-ulose + CO2 + NADH. The enzyme catalyses UDP-4-amino-4-deoxy-beta-L-arabinose + (6R)-10-formyltetrahydrofolate = UDP-4-deoxy-4-formamido-beta-L-arabinose + (6S)-5,6,7,8-tetrahydrofolate + H(+). The protein operates within nucleotide-sugar biosynthesis; UDP-4-deoxy-4-formamido-beta-L-arabinose biosynthesis; UDP-4-deoxy-4-formamido-beta-L-arabinose from UDP-alpha-D-glucuronate: step 1/3. It functions in the pathway nucleotide-sugar biosynthesis; UDP-4-deoxy-4-formamido-beta-L-arabinose biosynthesis; UDP-4-deoxy-4-formamido-beta-L-arabinose from UDP-alpha-D-glucuronate: step 3/3. Its pathway is bacterial outer membrane biogenesis; lipopolysaccharide biosynthesis. Functionally, bifunctional enzyme that catalyzes the oxidative decarboxylation of UDP-glucuronic acid (UDP-GlcUA) to UDP-4-keto-arabinose (UDP-Ara4O) and the addition of a formyl group to UDP-4-amino-4-deoxy-L-arabinose (UDP-L-Ara4N) to form UDP-L-4-formamido-arabinose (UDP-L-Ara4FN). The modified arabinose is attached to lipid A and is required for resistance to polymyxin and cationic antimicrobial peptides. This Pseudomonas fluorescens (strain ATCC BAA-477 / NRRL B-23932 / Pf-5) protein is Bifunctional polymyxin resistance protein ArnA.